Consider the following 248-residue polypeptide: ATP synthase subunit a (248 aa).

The next 7 helical transmembrane spans lie at 29 to 49 (AMLT…CLFS), 85 to 105 (VFPF…QGLV), 115 to 135 (LIQT…IVLA), 143 to 163 (LFLP…IEIV), 176 to 196 (LFAN…VAWA), 201 to 221 (GGLL…LFGL), and 227 to 247 (LIQA…AIVL).

This sequence belongs to the ATPase A chain family. In terms of assembly, F-type ATPases have 2 components, CF(1) - the catalytic core - and CF(0) - the membrane proton channel. CF(1) has five subunits: alpha(3), beta(3), gamma(1), delta(1), epsilon(1). CF(0) has three main subunits: a, b and c.

Its subcellular location is the mitochondrion inner membrane. In terms of biological role, mitochondrial membrane ATP synthase (F(1)F(0) ATP synthase or Complex V) produces ATP from ADP in the presence of a proton gradient across the membrane which is generated by electron transport complexes of the respiratory chain. F-type ATPases consist of two structural domains, F(1) - containing the extramembraneous catalytic core and F(0) - containing the membrane proton channel, linked together by a central stalk and a peripheral stalk. During catalysis, ATP synthesis in the catalytic domain of F(1) is coupled via a rotary mechanism of the central stalk subunits to proton translocation. Key component of the proton channel; it may play a direct role in the translocation of protons across the membrane. The protein is ATP synthase subunit a (ATP6) of Pylaiella littoralis (Seaweed).